The chain runs to 112 residues: Large ribosomal subunit protein eL33y (112 aa).

Belongs to the eukaryotic ribosomal protein eL33 family.

This is Large ribosomal subunit protein eL33y (RPL35AC) from Arabidopsis thaliana (Mouse-ear cress).